The following is a 370-amino-acid chain: Zinc finger protein 830 (370 aa).

2 disordered regions span residues 1-21 (MASS…QEEL) and 75-220 (HRER…LVPH). The residue at position 2 (A2) is an N-acetylalanine. The stretch at 16 to 40 (VNQEELRRLMKEKQRLSTNRKRIES) forms a coiled coil. Residues 53–75 (CALCNTPVKSELLWQTHVLGKQH) form a C2H2-type zinc finger. Over residues 90-99 (QGPSAGTAPQ) the composition is skewed to polar residues. Basic and acidic residues predominate over residues 104–115 (KTTDVESQDAKK). Residues 121–134 (DQVQPSTSASSANF) are compositionally biased toward polar residues. A compositionally biased stretch (acidic residues) spans 156-171 (DYEEEEEEEEEEELGG). Positions 172-191 (GEERRDSSKHLPDAQGREHS) are enriched in basic and acidic residues. The span at 196–212 (RETTSNVLPNDPFNTNP) shows a compositional bias: polar residues. A Phosphoserine modification is found at S223. Residues 310 to 338 (IECYRRVEKLRNRQDEIKNKLKEVLTIKE) are a coiled coil. Phosphoserine occurs at positions 349 and 360.

Component of the XAB2 complex, a multimeric protein complex composed of XAB2, PRPF19, AQR, ZNF830, ISY1, and PPIE; this complex binds preferentially to RNA. Interacts with XAB2. Identified in a pentameric intron-binding (IB) complex composed of AQR, XAB2, ISY1, ZNF830 and PPIE that is incorporated into the spliceosome as a preassembled complex. The IB complex does not contain PRPF19. Post-translationally, phosphorylated in response to DNA damage by the cell cycle checkpoint kinases ATR/ATM.

It localises to the nucleus. Its subcellular location is the chromosome. The protein resides in the nucleus speckle. In terms of biological role, may play a role in pre-mRNA splicing as component of the spliceosome. Acts as an important regulator of the cell cycle that participates in the maintenance of genome integrity. During cell cycle progression in embryonic fibroblast, prevents replication fork collapse, double-strand break formation and cell cycle checkpoint activation. Controls mitotic cell cycle progression and cell survival in rapidly proliferating intestinal epithelium and embryonic stem cells. During the embryo preimplantation, controls different aspects of M phase. During early oocyte growth, plays a role in oocyte survival by preventing chromosomal breaks formation, activation of TP63 and reduction of transcription. This Rattus norvegicus (Rat) protein is Zinc finger protein 830.